We begin with the raw amino-acid sequence, 420 residues long: Gamma-glutamyl phosphate reductase (420 aa).

Belongs to the gamma-glutamyl phosphate reductase family.

The protein localises to the cytoplasm. The enzyme catalyses L-glutamate 5-semialdehyde + phosphate + NADP(+) = L-glutamyl 5-phosphate + NADPH + H(+). It functions in the pathway amino-acid biosynthesis; L-proline biosynthesis; L-glutamate 5-semialdehyde from L-glutamate: step 2/2. Functionally, catalyzes the NADPH-dependent reduction of L-glutamate 5-phosphate into L-glutamate 5-semialdehyde and phosphate. The product spontaneously undergoes cyclization to form 1-pyrroline-5-carboxylate. The protein is Gamma-glutamyl phosphate reductase of Shewanella denitrificans (strain OS217 / ATCC BAA-1090 / DSM 15013).